A 278-amino-acid chain; its full sequence is MSVKAYFELVRIHNVIGSAISVFMGYVVASEWKIVPIKLILAMIVVSVIAAGGYIINDVFDIEIDKINKPNRPLPSGRIKISRARSLSIVLFLVGIVLSVLLNIYAFIIALLTVLALYYYAKDLKKQGLVGNLIVALTSALSAFYGGLAFFEGSWVIRTLIPTLYIFFFTLTREFVKGIEDVKGDMTNGVKTLAVRVGIEKTWFISKIILVILIVTSFIPYFFGFNIIYLIGILFLDIILILVVLLRHDIESASKARAYMKVYALGTLILFALGTLPI.

Transmembrane regions (helical) follow at residues 15-35 (VIGS…WKIV), 36-56 (PIKL…GYII), 89-109 (IVLF…AFII), 133-153 (LIVA…FFEG), 159-179 (TLIP…VKGI), 203-223 (WFIS…PYFF), 225-245 (FNII…LVVL), and 258-278 (AYMK…TLPI).

The protein belongs to the UbiA prenyltransferase family. DGGGP synthase subfamily. It depends on Mg(2+) as a cofactor.

It localises to the cell membrane. The catalysed reaction is sn-3-O-(geranylgeranyl)glycerol 1-phosphate + (2E,6E,10E)-geranylgeranyl diphosphate = 2,3-bis-O-(geranylgeranyl)-sn-glycerol 1-phosphate + diphosphate. It participates in membrane lipid metabolism; glycerophospholipid metabolism. Functionally, prenyltransferase that catalyzes the transfer of the geranylgeranyl moiety of geranylgeranyl diphosphate (GGPP) to the C2 hydroxyl of (S)-3-O-geranylgeranylglyceryl phosphate (GGGP). This reaction is the second ether-bond-formation step in the biosynthesis of archaeal membrane lipids. The chain is Digeranylgeranylglyceryl phosphate synthase from Sulfurisphaera tokodaii (strain DSM 16993 / JCM 10545 / NBRC 100140 / 7) (Sulfolobus tokodaii).